Consider the following 309-residue polypeptide: Aspartate carbamoyltransferase catalytic subunit (309 aa).

The carbamoyl phosphate site is built by R58 and T59. K86 serves as a coordination point for L-aspartate. 3 residues coordinate carbamoyl phosphate: R108, H136, and Q139. The L-aspartate site is built by R169 and R223. Residues G265 and P266 each contribute to the carbamoyl phosphate site.

It belongs to the aspartate/ornithine carbamoyltransferase superfamily. ATCase family. Heterododecamer (2C3:3R2) of six catalytic PyrB chains organized as two trimers (C3), and six regulatory PyrI chains organized as three dimers (R2).

It catalyses the reaction carbamoyl phosphate + L-aspartate = N-carbamoyl-L-aspartate + phosphate + H(+). It functions in the pathway pyrimidine metabolism; UMP biosynthesis via de novo pathway; (S)-dihydroorotate from bicarbonate: step 2/3. Catalyzes the condensation of carbamoyl phosphate and aspartate to form carbamoyl aspartate and inorganic phosphate, the committed step in the de novo pyrimidine nucleotide biosynthesis pathway. This is Aspartate carbamoyltransferase catalytic subunit from Akkermansia muciniphila (strain ATCC BAA-835 / DSM 22959 / JCM 33894 / BCRC 81048 / CCUG 64013 / CIP 107961 / Muc).